A 166-amino-acid polypeptide reads, in one-letter code: UPF0254 protein Maeo_0668 (166 aa).

Belongs to the UPF0254 family.

This Methanococcus aeolicus (strain ATCC BAA-1280 / DSM 17508 / OCM 812 / Nankai-3) protein is UPF0254 protein Maeo_0668.